The sequence spans 542 residues: Calcium/calmodulin-dependent protein kinase type II subunit beta (542 aa).

The Protein kinase domain occupies 14–272 (YQLYEDIGKG…AHEALKHPWV (259 aa)). Tyr17 is modified (phosphotyrosine). ATP is bound by residues 20 to 28 (IGKGAFSVV) and Lys43. Catalysis depends on Asp136, which acts as the Proton acceptor. The segment at 283–292 (HRQETVECLK) is autoinhibitory domain. At Thr287 the chain carries Phosphothreonine; by autocatalysis. Residues 291–301 (LKKFNARRKLK) form a calmodulin-binding region. A phosphothreonine; by autocatalysis mark is found at Thr306 and Thr307. The interval 349–376 (ADGVKPQTNSTKNSSAITSPKGSLPPAA) is disordered. Residues 354-369 (PQTNSTKNSSAITSPK) are compositionally biased toward polar residues. Residues Ser367, Ser371, Ser394, and Ser397 each carry the phosphoserine modification. Phosphothreonine occurs at positions 400 and 401.

This sequence belongs to the protein kinase superfamily. CAMK Ser/Thr protein kinase family. CaMK subfamily. In terms of assembly, CAMK2 is composed of 4 different chains: alpha (CAMK2A), beta (CAMK2B), gamma (CAMK2G), and delta (CAMK2D). The different isoforms assemble into homo- or heteromultimeric holoenzymes composed of 12 subunits with two hexameric rings stacked one on top of the other. Interacts with SYNGAP1, CAMK2N2 and MPDZ. Interacts with FOXO3. Interacts (when in a kinase inactive state not associated with calmodulin) with ARC; leading to target ARC to inactive synapses. Interacts with CAMK2N1; this interaction requires CAMK2B activation by Ca(2+). Autophosphorylation of Thr-287 following activation by Ca(2+)/calmodulin. Phosphorylation of Thr-287 locks the kinase into an activated state.

The protein resides in the cytoplasm. The protein localises to the cytoskeleton. Its subcellular location is the microtubule organizing center. It localises to the centrosome. It is found in the sarcoplasmic reticulum membrane. The protein resides in the synapse. It catalyses the reaction L-seryl-[protein] + ATP = O-phospho-L-seryl-[protein] + ADP + H(+). It carries out the reaction L-threonyl-[protein] + ATP = O-phospho-L-threonyl-[protein] + ADP + H(+). Its activity is regulated as follows. Activated by Ca(2+)/calmodulin. Binding of calmodulin results in conformational change that relieves intrasteric autoinhibition and allows autophosphorylation of Thr-287 which turns the kinase in a constitutively active form and confers to the kinase a Ca(2+)-independent activity. Its function is as follows. Calcium/calmodulin-dependent protein kinase that functions autonomously after Ca(2+)/calmodulin-binding and autophosphorylation, and is involved in dendritic spine and synapse formation, neuronal plasticity and regulation of sarcoplasmic reticulum Ca(2+) transport in skeletal muscle. In neurons, plays an essential structural role in the reorganization of the actin cytoskeleton during plasticity by binding and bundling actin filaments in a kinase-independent manner. This structural function is required for correct targeting of CaMK2A, which acts downstream of NMDAR to promote dendritic spine and synapse formation and maintain synaptic plasticity which enables long-term potentiation (LTP) and hippocampus-dependent learning. In developing hippocampal neurons, promotes arborization of the dendritic tree and in mature neurons, promotes dendritic remodeling. Also regulates the migration of developing neurons. Participates in the modulation of skeletal muscle function in response to exercise. In slow-twitch muscles, is involved in regulation of sarcoplasmic reticulum (SR) Ca(2+) transport and in fast-twitch muscle participates in the control of Ca(2+) release from the SR through phosphorylation of triadin, a ryanodine receptor-coupling factor, and phospholamban (PLN/PLB), an endogenous inhibitor of SERCA2A/ATP2A2. In response to interferon-gamma (IFN-gamma) stimulation, catalyzes phosphorylation of STAT1, stimulating the JAK-STAT signaling pathway. Phosphorylates reticulophagy regulator RETREG1 at 'Thr-134' under endoplasmic reticulum stress conditions which enhances RETREG1 oligomerization and its membrane scission and reticulophagy activity. This chain is Calcium/calmodulin-dependent protein kinase type II subunit beta (Camk2b), found in Mus musculus (Mouse).